The following is a 679-amino-acid chain: MSKNLLIELGLEELPAYVVTPSEKQLGERLATFLTENRLSFEDIQTFSTPRRLAVRVSGLAAQQTDLTEDFKGPAKKIALDADGNFSKAAQGFVRGKGLTTDAIEFREVKGEEYVYVTKHEAGKPAKEVLLGVTEVLSAMTFPVSMHWANNSFEYIRPVHTLTVLLNDEALELDFLDIHSGRVSRGHRFLGTETTITSADSYEADLRSQFVIADAKERQEMIVEQIKAIEAAQGVQVDIDADLLNEVLNLVEFPTAFMGSFDAKYLDVPEEVLVTSMKNHQRYFVVRDQEGHLMPNFVSVRNGNDQAIENVIKGNEKVLVARLEDGEFFWREDQKLQIADLVAKLTNVTFHEKIGSLAEHMDRTRVIAASLAKEANLSAEEVTAVDRAAQIYKFDLLTGMVGEFDELQGIMGEKYARLAGEDAAVATAIREHYLPDAAGGALPETKVGAVLALADKLDTLLSFFSVGLIPSGSNDPYALRRATQGIVRILDHFGWRIPMDKLVDSLYDLSFDSLTYANKADVMNFIRARVDKMMGKAVPKDIREAVLESSTFVVPEMLAAAEALVKASHTENYKPAVESLSRAFNLAEKADASVHVDPSLFENEQENTLFAAIQGLTLAGSAAQQLEQVFVLSPVINDFFDNTMVMAEDQALKNNRLAILSDLVSKAKTIAAFNQLNTK.

The protein belongs to the class-II aminoacyl-tRNA synthetase family. As to quaternary structure, tetramer of two alpha and two beta subunits.

Its subcellular location is the cytoplasm. It carries out the reaction tRNA(Gly) + glycine + ATP = glycyl-tRNA(Gly) + AMP + diphosphate. The sequence is that of Glycine--tRNA ligase beta subunit from Streptococcus pyogenes serotype M3 (strain ATCC BAA-595 / MGAS315).